A 905-amino-acid chain; its full sequence is Respiratory burst oxidase homolog protein B (905 aa).

2 disordered regions span residues 1–46 and 69–134; these read MADL…KTAR and EVRG…VRKR. The Cytoplasmic portion of the chain corresponds to 1-355; that stretch reads MADLEAGMVA…MYFLEENWKR (355 aa). The span at 29 to 44 shows a compositional bias: polar residues; it reads IPNSGNLGSSNRSTKT. Residues 75 to 84 are compositionally biased toward gly residues; it reads EGGSGHGTGF. A compositionally biased stretch (polar residues) spans 91 to 108; the sequence is SPSSKSGKLTSKLRQVTN. EF-hand-like stretches follow at residues 172 to 180 and 206 to 217; these read QVDGVLLRS and RGIVKQVLTKDE. 2 EF-hand domains span residues 229–264 and 273–308; these read GFDN…SASA and RADE…SPSE. Ca(2+) is bound by residues Asp-242, Asn-244, Asp-246, Arg-248, and Glu-253. The chain crosses the membrane as a helical span at residues 356 to 376; it reads SWVMTLWISICIALFIWKFIQ. Residues 377–440 lie on the Extracellular side of the membrane; it reads YRNRAVFGIM…FNDNINFHKV (64 aa). In terms of domain architecture, Ferric oxidoreductase spans 395–551; sequence GAAETLKFNM…HLFVIVYTLL (157 aa). A helical membrane pass occupies residues 441–461; sequence IAAGVAVGVALHAGAHLTCDF. The Cytoplasmic segment spans residues 462-496; it reads PRLLHASDAQYELMKPFFGEKRPPNYWWFVKGTEG. Residues 497-517 form a helical membrane-spanning segment; the sequence is WTGVVMVVLMAIAFTLAQPWF. At 518-539 the chain is on the extracellular side; it reads RRNKLKDSNPLKKMTGFNAFWF. The helical transmembrane segment at 540 to 560 threads the bilayer; that stretch reads THHLFVIVYTLLFVHGTCLYL. Residues 561 to 568 lie on the Cytoplasmic side of the membrane; the sequence is SRKWYKKT. Residues 569–586 traverse the membrane as a helical segment; sequence TWMYLAVPVVLYVSERIL. Residues 587–715 form the FAD-binding FR-type domain; that stretch reads RLFRSHDAVG…DGPYGAPAQD (129 aa). Residues 587–717 are Extracellular-facing; that stretch reads RLFRSHDAVG…PYGAPAQDYR (131 aa). The helical transmembrane segment at 718–738 threads the bilayer; that stretch reads EYDVLLLIGLGIGATPLISIV. Topologically, residues 739–905 are cytoplasmic; it reads KDVLNHIQGE…TRFDFHKENF (167 aa).

Belongs to the RBOH (TC 5.B.1.3) family. As to quaternary structure, monomer and homodimer, stabilized by swapping the EF-hand motifs. Interacts with GTP-bound RAC1.

It is found in the membrane. Functionally, calcium-dependent NADPH oxidase that generates superoxide. The sequence is that of Respiratory burst oxidase homolog protein B (RBOHB) from Oryza sativa subsp. japonica (Rice).